We begin with the raw amino-acid sequence, 423 residues long: F-box/LRR-repeat protein 2 (423 aa).

The 47-residue stretch at 9 to 55 folds into the F-box domain; sequence GLINKKLPKELLLRIFSFLDIVTLCRCAQISKAWNILALDGSNWQRI. LRR repeat units follow at residues 61–87, 88–113, 114–139, 140–165, 166–191, 192–217, 218–243, 244–269, 270–295, 296–321, 322–350, 351–375, and 376–401; these read QTDV…SLRG, CIGV…NLNG, CTKI…DLTS, CVSI…NLSW, CDQI…LLRG, CTQL…NLQS, CSRV…CLSG, CGSL…EAAR, CSHL…DLEE, CILI…SLSH, CELI…ELDN, CLLI…ELYD, and CQQV…AYFA. An interaction with Calmodulin region spans residues 80-90; that stretch reads LRKLSLRGCIG. Lys-201 is covalently cross-linked (Glycyl lysine isopeptide (Lys-Gly) (interchain with G-Cter in ubiquitin)). Thr-404 is modified (phosphothreonine). Cys-420 carries the S-geranylgeranyl cysteine lipid modification. The short motif at 420–423 is the CAAX motif element; the sequence is CVIL.

In terms of assembly, part of the SCF (SKP1-CUL1-F-box) E3 ubiquitin-protein ligase complex SCF(FBXL2) composed of CUL1, SKP1, RBX1 and FBXL2. Interacts with calmodulin; may antagonize substrate ubiquitination by SCF(FBXL2). May interact with PIK3R1. Interacts with PTPN13. In terms of processing, phosphorylated by GSK-beta (GSK3B), promoting recognition by FBXO3, leading to its ubiquitination by the SCF(FBXO3) complex. Post-translationally, ubiquitinated at Lys-201 by the SCF(FBXO3) complex in response to lipopolysaccharide (LPS), leading to its degradation by the proteasome.

It localises to the membrane. Its pathway is protein modification; protein ubiquitination. Its function is as follows. Calcium-activated substrate recognition component of the SCF (SKP1-cullin-F-box protein) E3 ubiquitin-protein ligase complex, SCF(FBXL2), which mediates the ubiquitination and subsequent proteasomal degradation of target proteins. Unlike many F-box proteins, FBXL2 does not seem to target phosphodegron within its substrates but rather calmodulin-binding motifs and is thereby antagonized by calmodulin. This is the case for the cyclins CCND2 and CCND3 which polyubiquitination and subsequent degradation are inhibited by calmodulin. Through CCND2 and CCND3 degradation induces cell-cycle arrest in G(0). SCF(FBXL2) also mediates PIK3R2 ubiquitination and proteasomal degradation thereby regulating phosphatidylinositol 3-kinase signaling and autophagy. PCYT1A monoubiquitination by SCF(FBXL2) and subsequent degradation regulates synthesis of phosphatidylcholine, which is utilized for formation of membranes and of pulmonary surfactant. The SCF(FBXL2) complex acts as a regulator of inflammation by mediating ubiquitination and degradation of TRAF proteins (TRAF1, TRAF2, TRAF3, TRAF4, TRAF5 and TRAF6). The SCF(FBXL2) complex acts as a negative regulator of the NLRP3 inflammasome by mediating ubiquitination and degradation of NLRP3. The polypeptide is F-box/LRR-repeat protein 2 (Bos taurus (Bovine)).